The primary structure comprises 282 residues: NADPH-dependent 7-cyano-7-deazaguanine reductase (282 aa).

88–90 (IES) lines the substrate pocket. 90–91 (SK) provides a ligand contact to NADPH. Residue cysteine 190 is the Thioimide intermediate of the active site. Aspartate 197 (proton donor) is an active-site residue. 229-230 (HE) is a substrate binding site. 258-259 (RG) contacts NADPH.

This sequence belongs to the GTP cyclohydrolase I family. QueF type 2 subfamily. In terms of assembly, homodimer.

It localises to the cytoplasm. The catalysed reaction is 7-aminomethyl-7-carbaguanine + 2 NADP(+) = 7-cyano-7-deazaguanine + 2 NADPH + 3 H(+). It participates in tRNA modification; tRNA-queuosine biosynthesis. Its function is as follows. Catalyzes the NADPH-dependent reduction of 7-cyano-7-deazaguanine (preQ0) to 7-aminomethyl-7-deazaguanine (preQ1). The chain is NADPH-dependent 7-cyano-7-deazaguanine reductase from Salmonella arizonae (strain ATCC BAA-731 / CDC346-86 / RSK2980).